An 82-amino-acid chain; its full sequence is UPF0298 protein SMU_1670c (82 aa).

Belongs to the UPF0298 family.

The protein localises to the cytoplasm. The chain is UPF0298 protein SMU_1670c from Streptococcus mutans serotype c (strain ATCC 700610 / UA159).